Here is a 269-residue protein sequence, read N- to C-terminus: UPF0328 protein ECU03_0020 (269 aa).

The protein belongs to the UPF0328 family.

The chain is UPF0328 protein ECU03_0020 from Encephalitozoon cuniculi (strain GB-M1) (Microsporidian parasite).